The sequence spans 1124 residues: Phytochrome A (1124 aa).

The segment covering 1 to 19 (MSTTRPSQSSNNSGRSRNS) has biased composition (low complexity). Residues 1–21 (MSTTRPSQSSNNSGRSRNSAR) form a disordered region. The GAF domain occupies 218 to 401 (SMERLCDTMV…VFAIHVNKEI (184 aa)). Cys-323 lines the phytochromobilin pocket. 2 consecutive PAS domains span residues 617 to 687 (VTSE…LQGE) and 750 to 821 (DYKA…VNFG). The Histidine kinase domain maps to 901–1120 (YMKRQIRNPL…ILSVELAAAH (220 aa)).

Belongs to the phytochrome family. As to quaternary structure, homodimer. Contains one covalently linked phytochromobilin chromophore.

Its function is as follows. Regulatory photoreceptor which exists in two forms that are reversibly interconvertible by light: the Pr form that absorbs maximally in the red region of the spectrum and the Pfr form that absorbs maximally in the far-red region. Photoconversion of Pr to Pfr induces an array of morphogenic responses, whereas reconversion of Pfr to Pr cancels the induction of those responses. Pfr controls the expression of a number of nuclear genes including those encoding the small subunit of ribulose-bisphosphate carboxylase, chlorophyll A/B binding protein, protochlorophyllide reductase, rRNA, etc. It also controls the expression of its own gene(s) in a negative feedback fashion. In Pisum sativum (Garden pea), this protein is Phytochrome A (PHYA).